We begin with the raw amino-acid sequence, 495 residues long: Carbohydrate oxidase (495 aa).

Positions 1–22 are cleaved as a signal peptide; sequence MRSAFILALGLITASADALVTR. Residues 55–229 enclose the FAD-binding PCMH-type domain; that stretch reads LPYIPTAIAQ…AVWKLATFPA (175 aa). The segment at residues 92–154 is a cross-link (6-(S-cysteinyl)-8alpha-(pros-histidyl)-FAD (His-Cys)); that stretch reads HSYASFGFGG…YGRAISHGTC (63 aa). 2 N-linked (GlcNAc...) asparagine glycosylation sites follow: Asn-244 and Asn-417.

The protein belongs to the oxygen-dependent FAD-linked oxidoreductase family. Requires FAD as cofactor. Post-translationally, the FAD cofactor is bound via a bicovalent 6-S-cysteinyl, 8alpha-N1-histidyl FAD linkage.

The protein localises to the secreted. The catalysed reaction is beta-D-glucose + O2 = D-glucono-1,5-lactone + H2O2. The enzyme catalyses D-galactose + O2 = D-galactono-1,5-lactone + H2O2. It carries out the reaction D-cellobiose + O2 = D-cellobiono-1,5-lactone + H2O2. It catalyses the reaction beta-lactose + O2 = lactobiono-1,5-lactone + H2O2. The catalysed reaction is D-maltose + O2 = D-maltobiono-1,5-lactone + H2O2. The enzyme catalyses D-xylose + O2 = D-xylono-1,5-lactone + H2O2. Catalyzes the selective oxidation of C1 hydroxyl moieties on mono-, oligo- and polysaccharides with concomitant reduction of molecular oxygen to hydrogen peroxide. This results in the formation of the corresponding lactones, which typically undergo spontaneous hydrolysis. Carbohydrate oxidase is able to oxidize a variety of substrates including D-glucose, D-galactose, D-xylose, D-maltose, D-cellobiose, and lactose. In addition, among various oligosaccharides, the enzyme preferred tetrameric dextrins, indicating a favorable interaction of four linked glucose units with the substrate binding pocket. This is Carbohydrate oxidase from Microdochium nivale (Pink snow mold).